Consider the following 229-residue polypeptide: tRNA (guanosine(18)-2'-O)-methyltransferase (229 aa).

Residues Thr96, Ile139, and Leu148 each coordinate S-adenosyl-L-methionine.

It belongs to the class IV-like SAM-binding methyltransferase superfamily. RNA methyltransferase TrmH family.

The enzyme catalyses guanosine(18) in tRNA + S-adenosyl-L-methionine = 2'-O-methylguanosine(18) in tRNA + S-adenosyl-L-homocysteine + H(+). Catalyzes the 2'-O methylation of guanosine at position 18 in tRNA. The chain is tRNA (guanosine(18)-2'-O)-methyltransferase from Escherichia coli O157:H7.